A 796-amino-acid polypeptide reads, in one-letter code: Cadherin-11 (796 aa).

A signal peptide spans 1–24; that stretch reads MKENYCLQAALVCLSMLYHSQAFA. Residues 25-53 constitute a propeptide that is removed on maturation; that stretch reads LERRSHLHPSFHGHHEKGKEGQVLQRSKR. Cadherin domains lie at 54 to 159, 160 to 268, 269 to 383, 384 to 486, and 487 to 612; these read GWVW…PPEF, LHEI…PPKF, PQSV…PPMF, LAPS…DNAP, and KFAA…YILN. The Extracellular segment spans residues 54-617; it reads GWVWNQFFVI…AYILNAGLST (564 aa). Asparagine 455 and asparagine 540 each carry an N-linked (GlcNAc...) asparagine glycan. A helical transmembrane segment spans residues 618–640; it reads GALIAILACIVILLVIVVLFVTL. Over 641-796 the chain is Cytoplasmic; it reads RRQKKEPLIV…GSKDTFDDDS (156 aa). Position 788 is a phosphoserine (serine 788). Threonine 791 carries the post-translational modification Phosphothreonine.

As to quaternary structure, interacts with PCDH8. As to expression, selectively expressed in osteoblastic cell lines, precursor cell lines of osteoblasts, and primary osteoblastic cells from calvaria, as well as in lung, testis, and brain tissues at low levels.

The protein localises to the cell membrane. In terms of biological role, cadherins are calcium-dependent cell adhesion proteins. They preferentially interact with themselves in a homophilic manner in connecting cells; cadherins may thus contribute to the sorting of heterogeneous cell types. Required for proper focal adhesion assembly. Involved in the regulation of cell migration. This is Cadherin-11 (Cdh11) from Mus musculus (Mouse).